Consider the following 380-residue polypeptide: Cytochrome b (380 aa).

4 helical membrane-spanning segments follow: residues 34-54 (FGSL…LLAM), 78-99 (WLIR…YLHI), 114-134 (WNTG…GYVL), and 179-199 (FFAL…IHLT). Residues H84 and H98 each contribute to the heme b site. The heme b site is built by H183 and H197. H202 is an a ubiquinone binding site. Transmembrane regions (helical) follow at residues 227–247 (LKDI…ALFS), 289–309 (LGGV…PFLH), 321–341 (LSQL…WVGS), and 348–368 (FIII…ILFP).

This sequence belongs to the cytochrome b family. In terms of assembly, the cytochrome bc1 complex contains 11 subunits: 3 respiratory subunits (MT-CYB, CYC1 and UQCRFS1), 2 core proteins (UQCRC1 and UQCRC2) and 6 low-molecular weight proteins (UQCRH/QCR6, UQCRB/QCR7, UQCRQ/QCR8, UQCR10/QCR9, UQCR11/QCR10 and a cleavage product of UQCRFS1). This cytochrome bc1 complex then forms a dimer. It depends on heme b as a cofactor.

The protein localises to the mitochondrion inner membrane. Its function is as follows. Component of the ubiquinol-cytochrome c reductase complex (complex III or cytochrome b-c1 complex) that is part of the mitochondrial respiratory chain. The b-c1 complex mediates electron transfer from ubiquinol to cytochrome c. Contributes to the generation of a proton gradient across the mitochondrial membrane that is then used for ATP synthesis. The chain is Cytochrome b (MT-CYB) from Macronectes giganteus (Southern giant petrel).